Here is a 592-residue protein sequence, read N- to C-terminus: Threonine dehydratase biosynthetic, chloroplastic (592 aa).

The transit peptide at 1–91 (MNSVQLPTAQ…NEAENGSIAE (91 aa)) directs the protein to the chloroplast. Position 141 is an N6-(pyridoxal phosphate)lysine (Lys-141). 2 ACT-like domains span residues 419 to 490 (AVLA…NLTT) and 512 to 583 (VLCR…LVSD).

Belongs to the serine/threonine dehydratase family. Pyridoxal 5'-phosphate serves as cofactor.

The protein localises to the plastid. It is found in the chloroplast. The enzyme catalyses L-threonine = 2-oxobutanoate + NH4(+). It participates in amino-acid biosynthesis; L-isoleucine biosynthesis; 2-oxobutanoate from L-threonine: step 1/1. With respect to regulation, allosterically inhibited by isoleucine. Strain GM11b is isoleucine feedback insensitive and is resistant to the antimetabolite L-O-methylthreonine. In terms of biological role, catalyzes the formation of alpha-ketobutyrate from threonine in a two-step reaction. The first step is a dehydration of threonine, followed by rehydration and liberation of ammonia. In Arabidopsis thaliana (Mouse-ear cress), this protein is Threonine dehydratase biosynthetic, chloroplastic (OMR1).